The sequence spans 206 residues: Small ribosomal subunit protein uS5 (206 aa).

The span at M1–D15 shows a compositional bias: polar residues. The disordered stretch occupies residues M1–W50. Basic and acidic residues predominate over residues R38–W50. One can recognise an S5 DRBM domain in the interval W50–V113.

The protein belongs to the universal ribosomal protein uS5 family. As to quaternary structure, part of the 30S ribosomal subunit. Contacts proteins S4 and S8.

Its function is as follows. With S4 and S12 plays an important role in translational accuracy. In terms of biological role, located at the back of the 30S subunit body where it stabilizes the conformation of the head with respect to the body. The chain is Small ribosomal subunit protein uS5 from Prochlorococcus marinus (strain MIT 9215).